The primary structure comprises 450 residues: Chromosomal replication initiator protein DnaA 2 (450 aa).

Residues 1-87 are domain I, interacts with DnaA modulators; it reads MLTCNECTTW…LEFVVAEHKK (87 aa). Positions 87–114 are domain II; sequence KPSAPVASQKESNEGISEVFEETKDFEL. The tract at residues 115-330 is domain III, AAA+ region; that stretch reads KLNLSYRFDN…GAINKLTAYC (216 aa). Residues G159, G161, K162, and T163 each contribute to the ATP site. The tract at residues 331–450 is domain IV, binds dsDNA; it reads RLFGKSLTET…VNLCKNHIVG (120 aa).

The protein belongs to the DnaA family. Oligomerizes as a right-handed, spiral filament on DNA at oriC.

It localises to the cytoplasm. Plays an essential role in the initiation and regulation of chromosomal replication. ATP-DnaA binds to the origin of replication (oriC) to initiate formation of the DNA replication initiation complex once per cell cycle. Binds the DnaA box (a 9 base pair repeat at the origin) and separates the double-stranded (ds)DNA. Forms a right-handed helical filament on oriC DNA; dsDNA binds to the exterior of the filament while single-stranded (ss)DNA is stabiized in the filament's interior. The ATP-DnaA-oriC complex binds and stabilizes one strand of the AT-rich DNA unwinding element (DUE), permitting loading of DNA polymerase. After initiation quickly degrades to an ADP-DnaA complex that is not apt for DNA replication. Binds acidic phospholipids. The polypeptide is Chromosomal replication initiator protein DnaA 2 (Chlamydia pneumoniae (Chlamydophila pneumoniae)).